The chain runs to 355 residues: Phosphate acyltransferase (355 aa).

The protein belongs to the PlsX family. Homodimer. Probably interacts with PlsY.

The protein localises to the cytoplasm. It carries out the reaction a fatty acyl-[ACP] + phosphate = an acyl phosphate + holo-[ACP]. It functions in the pathway lipid metabolism; phospholipid metabolism. In terms of biological role, catalyzes the reversible formation of acyl-phosphate (acyl-PO(4)) from acyl-[acyl-carrier-protein] (acyl-ACP). This enzyme utilizes acyl-ACP as fatty acyl donor, but not acyl-CoA. The protein is Phosphate acyltransferase of Erythrobacter litoralis (strain HTCC2594).